The primary structure comprises 613 residues: Dihydroxy-acid dehydratase (613 aa).

Asp81 serves as a coordination point for Mg(2+). Cys122 contacts [2Fe-2S] cluster. Mg(2+) contacts are provided by Asp123 and Lys124. At Lys124 the chain carries N6-carboxylysine. Residue Cys193 participates in [2Fe-2S] cluster binding. Glu489 contacts Mg(2+). The active-site Proton acceptor is the Ser515.

It belongs to the IlvD/Edd family. As to quaternary structure, homodimer. It depends on [2Fe-2S] cluster as a cofactor. The cofactor is Mg(2+).

It catalyses the reaction (2R)-2,3-dihydroxy-3-methylbutanoate = 3-methyl-2-oxobutanoate + H2O. The catalysed reaction is (2R,3R)-2,3-dihydroxy-3-methylpentanoate = (S)-3-methyl-2-oxopentanoate + H2O. It participates in amino-acid biosynthesis; L-isoleucine biosynthesis; L-isoleucine from 2-oxobutanoate: step 3/4. It functions in the pathway amino-acid biosynthesis; L-valine biosynthesis; L-valine from pyruvate: step 3/4. Its function is as follows. Functions in the biosynthesis of branched-chain amino acids. Catalyzes the dehydration of (2R,3R)-2,3-dihydroxy-3-methylpentanoate (2,3-dihydroxy-3-methylvalerate) into 2-oxo-3-methylpentanoate (2-oxo-3-methylvalerate) and of (2R)-2,3-dihydroxy-3-methylbutanoate (2,3-dihydroxyisovalerate) into 2-oxo-3-methylbutanoate (2-oxoisovalerate), the penultimate precursor to L-isoleucine and L-valine, respectively. This Pseudomonas fluorescens (strain SBW25) protein is Dihydroxy-acid dehydratase.